The sequence spans 87 residues: Acyl-CoA-binding protein (87 aa).

Ser2 bears the N-acetylserine mark. The ACB domain occupies 2-87; sequence SQAEFDKAAE…VEELKKKYGI (86 aa). Residue Lys8 is modified to N6-acetyllysine; alternate. N6-succinyllysine; alternate is present on Lys8. Lys14 is an an acyl-CoA binding site. Position 17 is an N6-succinyllysine (Lys17). Lys19 carries the N6-acetyllysine modification. Position 29 is a phosphotyrosine (Tyr29). An acyl-CoA contacts are provided by residues 29–33, Lys51, Lys55, and Tyr74; that span reads YSHYK. Lys51 is modified (N6-acetyllysine). Lys55 carries the post-translational modification N6-acetyllysine; alternate. An N6-succinyllysine; alternate modification is found at Lys55. Lys55 is modified (N6-(2-hydroxyisobutyryl)lysine; alternate). Lys55 is subject to N6-malonyllysine; alternate. Lys77 carries the post-translational modification N6-acetyllysine; alternate. N6-succinyllysine; alternate is present on Lys77.

Belongs to the ACBP family. In terms of assembly, monomer.

The protein resides in the endoplasmic reticulum. It localises to the golgi apparatus. Binds medium- and long-chain acyl-CoA esters with very high affinity and may function as an intracellular carrier of acyl-CoA esters. It is also able to displace diazepam from the benzodiazepine (BZD) recognition site located on the GABA type A receptor. It is therefore possible that this protein also acts as a neuropeptide to modulate the action of the GABA receptor. The polypeptide is Acyl-CoA-binding protein (DBI) (Bos taurus (Bovine)).